The chain runs to 386 residues: Pepsin A (386 aa).

A signal peptide spans 1-15; sequence MKWLLLISLVALSEC. The propeptide at 16 to 60 is activation peptide; sequence AIVKVPLVRKKSLRQNLIEHGLLNDFLKNQSPNPASKYFPQEPTV. Residues 74–383 form the Peptidase A1 domain; sequence YFGTIGIGTP…DRANNQVGLA (310 aa). D92 is a catalytic residue. 2 cysteine pairs are disulfide-bonded: C105–C110 and C266–C270. The active site involves D275. C309 and C342 are joined by a disulfide.

It belongs to the peptidase A1 family.

The protein localises to the secreted. It catalyses the reaction Preferential cleavage: hydrophobic, preferably aromatic, residues in P1 and P1' positions. Cleaves 1-Phe-|-Val-2, 4-Gln-|-His-5, 13-Glu-|-Ala-14, 14-Ala-|-Leu-15, 15-Leu-|-Tyr-16, 16-Tyr-|-Leu-17, 23-Gly-|-Phe-24, 24-Phe-|-Phe-25 and 25-Phe-|-Tyr-26 bonds in the B chain of insulin.. Functionally, shows particularly broad specificity; although bonds involving phenylalanine and leucine are preferred, many others are also cleaved to some extent. In Canis lupus familiaris (Dog), this protein is Pepsin A (PGA).